Reading from the N-terminus, the 104-residue chain is MRKIRKGDEVVVITGKDKGKRGTVLRVLETKLVVEGVNVAKKHQKPNPVRGVAGGIVEKTMPIDASNVAIFNPASQKADRVGFKVLEDGRKVRVFKSSGEVIGA.

This sequence belongs to the universal ribosomal protein uL24 family. As to quaternary structure, part of the 50S ribosomal subunit.

One of two assembly initiator proteins, it binds directly to the 5'-end of the 23S rRNA, where it nucleates assembly of the 50S subunit. Its function is as follows. One of the proteins that surrounds the polypeptide exit tunnel on the outside of the subunit. The protein is Large ribosomal subunit protein uL24 of Chromobacterium violaceum (strain ATCC 12472 / DSM 30191 / JCM 1249 / CCUG 213 / NBRC 12614 / NCIMB 9131 / NCTC 9757 / MK).